The primary structure comprises 155 residues: MLSINTEIKLQECLRNKCNHYQSNFALMDINGIYNTIMNEHKKFNLPLSIYLDRLFKQIQNGHNDLIQREKILKKITDTVSKKNISDSQFTNVKLLFIVYLMDYELYDSYEGKFDKEAIYQFVIIEHDWLNKHILSLVSTMMIIKDTLSEVVKMS.

This is an uncharacterized protein from Acanthamoeba polyphaga (Amoeba).